Here is a 338-residue protein sequence, read N- to C-terminus: Glyceraldehyde-3-phosphate dehydrogenase (338 aa).

NAD(+) contacts are provided by residues 12-13 (RI), Asp-34, and Arg-79. D-glyceraldehyde 3-phosphate is bound by residues 150–152 (SCT), Thr-181, 210–211 (TG), and Arg-233. Cys-151 acts as the Nucleophile in catalysis. Asn-315 contacts NAD(+).

Belongs to the glyceraldehyde-3-phosphate dehydrogenase family. As to quaternary structure, homotetramer.

The protein resides in the cytoplasm. The enzyme catalyses D-glyceraldehyde 3-phosphate + phosphate + NAD(+) = (2R)-3-phospho-glyceroyl phosphate + NADH + H(+). It functions in the pathway carbohydrate degradation; glycolysis; pyruvate from D-glyceraldehyde 3-phosphate: step 1/5. The sequence is that of Glyceraldehyde-3-phosphate dehydrogenase (GPD) from Sordaria macrospora.